The primary structure comprises 405 residues: 5-azacytidine-induced protein 2 (405 aa).

The tract at residues 1–198 is homodimerization; that stretch reads MDTLVEDDIC…TELQKARQTG (198 aa). Positions 40–197 form a coiled coil; sequence ALVTAYEDIK…RTELQKARQT (158 aa). The interaction with TBK1 and IKBKE stretch occupies residues 229–270; it reads SDNMQHAYWELKREMSNLHLVTQVQAELLRKLKTSAAVKKAC. Serine 331 and serine 366 each carry phosphoserine. The interval 357–377 is disordered; it reads LEDNSWVFPSPPKSSETAFGE.

As to quaternary structure, homodimer. Interacts with IKBKE and TBK1. Interacts with TICAM1. Interacts with TAX1BP1. Interacts with CALCOCO2. Ubiquitinated via 'Lys-48'-linked polyubiquitination by TRIM38, leading to its degradation. As to expression, testis, ovary, heart, lung, kidney and brain. Expressed mainly in the spermatocytes or spermatids in the testis.

It localises to the cytoplasm. In terms of biological role, adapter protein which binds TBK1 and IKBKE playing a role in antiviral innate immunity. Activates serine/threonine-protein kinase TBK1 and facilitates its oligomerization. Enhances the phosphorylation of NF-kappa-B p65 subunit RELA by TBK1. Promotes TBK1-induced as well as TNF-alpha or PMA-induced activation of NF-kappa-B. Participates in IFNB promoter activation via TICAM1. The protein is 5-azacytidine-induced protein 2 (Azi2) of Mus musculus (Mouse).